The sequence spans 243 residues: Fibroblast growth factor 12 (243 aa).

Disordered regions lie at residues 1–39 (MAAA…DGRS) and 216–243 (IGEK…QDST). The short motif at 11–38 (RQKRQARESNSDRVSASKRRSSPSKDGR) is the Bipartite nuclear localization signal element.

The protein belongs to the heparin-binding growth factors family. In terms of assembly, interacts with the C-terminal region of SCN9A. Brain, eye and testis; highly expressed in embryonic retina, olfactory epithelium, olfactory bulb, and in a segmental pattern of the body wall; in adult olfactory bulb, less in cerebellum, deep cerebellar nuclei, cortex and multiple midbrain structures.

It is found in the nucleus. Involved in nervous system development and function. Involved in the positive regulation of voltage-gated sodium channel activity. Promotes neuronal excitability by elevating the voltage dependence of neuronal sodium channel SCN8A fast inactivation. The sequence is that of Fibroblast growth factor 12 (FGF12) from Homo sapiens (Human).